We begin with the raw amino-acid sequence, 302 residues long: Probable 2-(5''-triphosphoribosyl)-3'-dephosphocoenzyme-A synthase 1 (302 aa).

Belongs to the CitG/MdcB family.

The catalysed reaction is 3'-dephospho-CoA + ATP = 2'-(5''-triphospho-alpha-D-ribosyl)-3'-dephospho-CoA + adenine. The protein is Probable 2-(5''-triphosphoribosyl)-3'-dephosphocoenzyme-A synthase 1 of Salmonella typhimurium (strain LT2 / SGSC1412 / ATCC 700720).